We begin with the raw amino-acid sequence, 233 residues long: Glyceraldehyde 3-phosphate phosphatase (233 aa).

Belongs to the HAD-like hydrolase superfamily. Mg(2+) serves as cofactor.

Catalyzes the dephosphorylation of D,L-glyceraldehyde 3-phosphate in vitro. This is Glyceraldehyde 3-phosphate phosphatase from Methanopyrus kandleri (strain AV19 / DSM 6324 / JCM 9639 / NBRC 100938).